The following is a 391-amino-acid chain: Thioredoxin-interacting protein (391 aa).

Lys212 is covalently cross-linked (Glycyl lysine isopeptide (Lys-Gly) (interchain with G-Cter in ubiquitin)). Position 361 is a phosphoserine (Ser361).

The protein belongs to the arrestin family. Homodimer; disulfide-linked. Interacts with TXN/thioredoxin through its redox-active site. Interacts with transcriptional repressors ZBTB16, ZBTB32 and HDAC1. Interacts with DDIT4. Ubiquitinated; undergoes heterotypic 'Lys-48'-/'Lys-63'-branched polyubiquitination catalyzed by ITCH and UBR5 resulting in proteasomal degradation. Deubiquitinated by USP5, leading to TXNIP stabilization.

Its subcellular location is the cytoplasm. Functionally, may act as an oxidative stress mediator by inhibiting thioredoxin activity or by limiting its bioavailability. Interacts with COPS5 and restores COPS5-induced suppression of CDKN1B stability, blocking the COPS5-mediated translocation of CDKN1B from the nucleus to the cytoplasm. Functions as a transcriptional repressor, possibly by acting as a bridge molecule between transcription factors and corepressor complexes, and over-expression will induce G0/G1 cell cycle arrest. Required for the maturation of natural killer cells. Acts as a suppressor of tumor cell growth. Inhibits the proteasomal degradation of DDIT4, and thereby contributes to the inhibition of the mammalian target of rapamycin complex 1 (mTORC1). The protein is Thioredoxin-interacting protein (TXNIP) of Sus scrofa (Pig).